The following is a 1370-amino-acid chain: Zinc finger MYM-type protein 3 (1370 aa).

Low complexity-rich tracts occupy residues 1–12 (MDPSDFPSPFDP) and 52–61 (PSSGALDLLD). 2 disordered regions span residues 1-72 (MDPS…DPGV) and 90-301 (PSPP…QRAG). A compositionally biased stretch (basic and acidic residues) spans 230–253 (ASEKPPERKRSERVRRAEPPKPEV). A phosphoserine mark is found at S263 and S267. The segment covering 263-279 (SDEDSDAMVDDPNDEDF) has biased composition (acidic residues). Glycyl lysine isopeptide (Lys-Gly) (interchain with G-Cter in SUMO2) cross-links involve residues K308, K320, and K328. MYM-type zinc fingers lie at residues 332-366 (QLFC…TKDS), 378-422 (HEFC…LHEV), 429-464 (HRLC…KTGS), 477-511 (KRFC…FEML), 521-559 (SLFC…PCYY), 567-604 (YQFC…KPEV), 612-646 (FQFC…HEKL), 653-692 (KSFC…GVTE), and 699-733 (WDFC…LETI). The residue at position 464 (S464) is a Phosphoserine. The segment covering 759 to 794 (NLDTQSGPESLLNSQSPESKPQTPSQTKVENSNTVR) has biased composition (polar residues). Residues 759–830 (NLDTQSGPES…PPPPATPRKN (72 aa)) are disordered. Glycyl lysine isopeptide (Lys-Gly) (interchain with G-Cter in SUMO2) cross-links involve residues K778 and K786. Position 795 is a phosphothreonine (T795). Residue K804 forms a Glycyl lysine isopeptide (Lys-Gly) (interchain with G-Cter in SUMO2) linkage. Pro residues predominate over residues 815 to 826 (APTPPPPPPPAT). 2 positions are modified to phosphothreonine: T817 and T826. Glycyl lysine isopeptide (Lys-Gly) (interchain with G-Cter in SUMO2) cross-links involve residues K847, K861, K920, and K1275.

As to quaternary structure, may be a component of a BHC histone deacetylase complex that contains HDAC1, HDAC2, HMG20B/BRAF35, KDM1A, RCOR1/CoREST, PHF21A/BHC80, ZMYM2, ZNF217, ZMYM3, GSE1 and GTF2I. In terms of tissue distribution, most abundant in brain, moderate in muscle and heart, low in other tissues except placenta.

The protein localises to the nucleus. Functionally, plays a role in the regulation of cell morphology and cytoskeletal organization. This Homo sapiens (Human) protein is Zinc finger MYM-type protein 3 (ZMYM3).